We begin with the raw amino-acid sequence, 105 residues long: UPF0145 protein HD_1349 (105 aa).

It belongs to the UPF0145 family.

The chain is UPF0145 protein HD_1349 from Haemophilus ducreyi (strain 35000HP / ATCC 700724).